Here is a 149-residue protein sequence, read N- to C-terminus: Calmodulin-like protein 3 (149 aa).

4 consecutive EF-hand domains span residues glutamate 8–asparagine 43, proline 44–aspartate 79, aspartate 81–lysine 116, and leucine 117–lysine 149. Ca(2+) is bound by residues aspartate 21, aspartate 23, aspartate 25, serine 27, glutamate 32, aspartate 57, aspartate 59, asparagine 61, threonine 63, glutamate 68, aspartate 94, aspartate 96, asparagine 98, glutamate 105, aspartate 130, aspartate 132, aspartate 134, glutamine 136, and glutamate 141.

Belongs to the calmodulin family. Interacts with MYO10, the interaction is calcium-dependent and essential for MYO10 function in filopodial extension.

In terms of biological role, may function as a specific light chain of unconventional myosin-10 (MYO10), also enhances MYO10 translation, possibly by acting as a chaperone for the emerging MYO10 heavy chain protein. May compete with calmodulin by binding, with different affinities, to cellular substrates. This chain is Calmodulin-like protein 3 (Calml3), found in Mus musculus (Mouse).